We begin with the raw amino-acid sequence, 223 residues long: Prolactin-3D4 (223 aa).

An N-terminal signal peptide occupies residues 1-28 (MQLTLTLSGSSMQLLLLVSNLLLWENMA). Cystine bridges form between C80-C198 and C215-C223. 2 N-linked (GlcNAc...) asparagine glycosylation sites follow: N108 and N157.

It belongs to the somatotropin/prolactin family. N-glycosylated.

It is found in the secreted. This Rattus norvegicus (Rat) protein is Prolactin-3D4 (Prl3d4).